Reading from the N-terminus, the 361-residue chain is tRNA/tmRNA (uracil-C(5))-methyltransferase (361 aa).

The S-adenosyl-L-methionine site is built by Gln-183, Tyr-211, Asn-216, Glu-232, and Asp-294. Cys-319 serves as the catalytic Nucleophile. The Proton acceptor role is filled by Glu-353.

Belongs to the class I-like SAM-binding methyltransferase superfamily. RNA M5U methyltransferase family. TrmA subfamily.

It catalyses the reaction uridine(54) in tRNA + S-adenosyl-L-methionine = 5-methyluridine(54) in tRNA + S-adenosyl-L-homocysteine + H(+). It carries out the reaction uridine(341) in tmRNA + S-adenosyl-L-methionine = 5-methyluridine(341) in tmRNA + S-adenosyl-L-homocysteine + H(+). Its function is as follows. Dual-specificity methyltransferase that catalyzes the formation of 5-methyluridine at position 54 (m5U54) in all tRNAs, and that of position 341 (m5U341) in tmRNA (transfer-mRNA). In Acinetobacter baumannii (strain AYE), this protein is tRNA/tmRNA (uracil-C(5))-methyltransferase.